The following is a 146-amino-acid chain: VHLTAEEKSAVAALWGKVNTDEVGGEALGRLLVVYPWTQRFFDSFGDLSSASAVMSNPKVKAHGKKVFDSFSNGLKHLDNLKGTFASLSELHCDKLHVDPENFKLLGNVLVVVLAHHLGKEFTPQVQSAFQKVVTGVANALAHKYH.

Val1 carries the N-acetylvaline modification. A Globin domain is found at 2–146 (HLTAEEKSAV…VANALAHKYH (145 aa)). Phosphoserine is present on Ser44. Lys59 bears the N6-acetyllysine mark. His63 lines the heme b pocket. Lys82 carries the N6-acetyllysine modification. Heme b is bound at residue His92. At Cys93 the chain carries S-nitrosocysteine. Residue Lys144 is modified to N6-acetyllysine.

Belongs to the globin family. Heterotetramer of two alpha chains and two beta chains. In terms of tissue distribution, red blood cells.

Functionally, involved in oxygen transport from the lung to the various peripheral tissues. The chain is Hemoglobin subunit beta from Tamias merriami (Merriam's chipmunk).